Reading from the N-terminus, the 139-residue chain is Transcription factor E (139 aa).

Residues 7 to 91 (IINKKQDEVS…DYEKILDTLL (85 aa)) form the HTH TFE/IIEalpha-type domain.

Belongs to the TFE family. In terms of assembly, monomer. Interaction with RNA polymerase subunits RpoF and RpoE is necessary for Tfe stimulatory transcription activity. Able to interact with Tbp and RNA polymerase in the absence of DNA promoter. Interacts both with the preinitiation and elongation complexes.

Functionally, transcription factor that plays a role in the activation of archaeal genes transcribed by RNA polymerase. Facilitates transcription initiation by enhancing TATA-box recognition by TATA-box-binding protein (Tbp), and transcription factor B (Tfb) and RNA polymerase recruitment. Not absolutely required for transcription in vitro, but particularly important in cases where Tbp or Tfb function is not optimal. It dynamically alters the nucleic acid-binding properties of RNA polymerases by stabilizing the initiation complex and destabilizing elongation complexes. Seems to translocate with the RNA polymerase following initiation and acts by binding to the non template strand of the transcription bubble in elongation complexes. The protein is Transcription factor E of Nanoarchaeum equitans (strain Kin4-M).